Reading from the N-terminus, the 124-residue chain is Small ribosomal subunit protein uS12 (124 aa).

Position 89 is a 3-methylthioaspartic acid (Asp89).

This sequence belongs to the universal ribosomal protein uS12 family. As to quaternary structure, part of the 30S ribosomal subunit. Contacts proteins S8 and S17. May interact with IF1 in the 30S initiation complex.

With S4 and S5 plays an important role in translational accuracy. Functionally, interacts with and stabilizes bases of the 16S rRNA that are involved in tRNA selection in the A site and with the mRNA backbone. Located at the interface of the 30S and 50S subunits, it traverses the body of the 30S subunit contacting proteins on the other side and probably holding the rRNA structure together. The combined cluster of proteins S8, S12 and S17 appears to hold together the shoulder and platform of the 30S subunit. The protein is Small ribosomal subunit protein uS12 of Haemophilus ducreyi (strain 35000HP / ATCC 700724).